The chain runs to 82 residues: UPF0153 protein VC_1057 (82 aa).

Belongs to the UPF0153 family.

This is UPF0153 protein VC_1057 from Vibrio cholerae serotype O1 (strain ATCC 39315 / El Tor Inaba N16961).